We begin with the raw amino-acid sequence, 203 residues long: Thymidine kinase (203 aa).

ATP contacts are provided by residues alanine 9–threonine 16 and aspartate 87–glutamine 90. The active-site Proton acceptor is the glutamate 88. Positions 145, 147, 181, and 184 each coordinate Zn(2+).

The protein belongs to the thymidine kinase family. In terms of assembly, homotetramer.

The protein resides in the cytoplasm. The catalysed reaction is thymidine + ATP = dTMP + ADP + H(+). The sequence is that of Thymidine kinase from Mesorhizobium japonicum (strain LMG 29417 / CECT 9101 / MAFF 303099) (Mesorhizobium loti (strain MAFF 303099)).